The sequence spans 117 residues: Immunoglobulin lambda variable 7-46 (117 aa).

An N-terminal signal peptide occupies residues 1 to 19; that stretch reads MAWTPLFLFLLTCCPGSNS. Residues 20–44 form a framework-1 region; that stretch reads QAVVTQEPSLTVSPGGTVTLTCGSS. In terms of domain architecture, Ig-like spans 20 to 117; it reads QAVVTQEPSL…YCLLSYSGAR (98 aa). Cysteine 41 and cysteine 109 are joined by a disulfide. The segment at 45–53 is complementarity-determining-1; it reads TGAVTSGHY. The interval 54–70 is framework-2; it reads PYWFQQKPGQAPRTLIY. Residues 71 to 73 form a complementarity-determining-2 region; the sequence is DTS. Residues 74–109 form a framework-3 region; sequence NKHSWTPARFSGSLLGGKAALTLLGAQPEDEAEYYC. The interval 110-117 is complementarity-determining-3; the sequence is LLSYSGAR.

As to quaternary structure, immunoglobulins are composed of two identical heavy chains and two identical light chains; disulfide-linked.

The protein localises to the secreted. Its subcellular location is the cell membrane. In terms of biological role, v region of the variable domain of immunoglobulin light chains that participates in the antigen recognition. Immunoglobulins, also known as antibodies, are membrane-bound or secreted glycoproteins produced by B lymphocytes. In the recognition phase of humoral immunity, the membrane-bound immunoglobulins serve as receptors which, upon binding of a specific antigen, trigger the clonal expansion and differentiation of B lymphocytes into immunoglobulins-secreting plasma cells. Secreted immunoglobulins mediate the effector phase of humoral immunity, which results in the elimination of bound antigens. The antigen binding site is formed by the variable domain of one heavy chain, together with that of its associated light chain. Thus, each immunoglobulin has two antigen binding sites with remarkable affinity for a particular antigen. The variable domains are assembled by a process called V-(D)-J rearrangement and can then be subjected to somatic hypermutations which, after exposure to antigen and selection, allow affinity maturation for a particular antigen. This Homo sapiens (Human) protein is Immunoglobulin lambda variable 7-46.